Reading from the N-terminus, the 302-residue chain is Short-chain dehydrogenase/reductase 1 (302 aa).

NADP(+) is bound by residues 20–23 (NKGL), Arg-43, 71–72 (DV), and Asn-98. Position 170 (Ser-170) interacts with substrate. Residues Tyr-226, Lys-230, and 257 to 262 (VKTDIN) contribute to the NADP(+) site. The active-site Proton acceptor is the Tyr-226.

The protein belongs to the short-chain dehydrogenases/reductases (SDR) family. In terms of tissue distribution, mainly expressed in flowers and flower buds, to a lesser extent in leaves and, at low levels, in stems and roots.

The protein operates within secondary metabolite biosynthesis; terpenoid biosynthesis. Component of the oleanane-type triterpene saponins (e.g. saponarioside A and saponarioside B) biosynthetic pathway, leading to the production of natural products with detergent properties used as traditional sources of soap. A dehydrogenase/reductase that, together with UGT74CD1, mediates the conversion of QA-tri to QA-triF; UGT74CD1 may transfer 4-keto-6-deoxy-glucose to QA-tri, which is in turn reduced to D-fucose by SDR1, thus leading to QA-triF formation via the initiation of the C-28 sugar chain. The sequence is that of Short-chain dehydrogenase/reductase 1 from Saponaria officinalis (Common soapwort).